Here is a 494-residue protein sequence, read N- to C-terminus: Glutamyl-tRNA(Gln) amidotransferase subunit A (494 aa).

Catalysis depends on charge relay system residues K81 and S156. The active-site Acyl-ester intermediate is the S180.

Belongs to the amidase family. GatA subfamily. As to quaternary structure, heterotrimer of A, B and C subunits.

The catalysed reaction is L-glutamyl-tRNA(Gln) + L-glutamine + ATP + H2O = L-glutaminyl-tRNA(Gln) + L-glutamate + ADP + phosphate + H(+). Allows the formation of correctly charged Gln-tRNA(Gln) through the transamidation of misacylated Glu-tRNA(Gln) in organisms which lack glutaminyl-tRNA synthetase. The reaction takes place in the presence of glutamine and ATP through an activated gamma-phospho-Glu-tRNA(Gln). This chain is Glutamyl-tRNA(Gln) amidotransferase subunit A, found in Mycobacterium tuberculosis (strain ATCC 25177 / H37Ra).